Consider the following 571-residue polypeptide: Chaperonin GroEL 1 (571 aa).

ATP contacts are provided by residues 29 to 32, Lys50, 86 to 90, Gly416, and Asp498; these read TLGP and DGTTT.

Belongs to the chaperonin (HSP60) family. As to quaternary structure, forms a cylinder of 14 subunits composed of two heptameric rings stacked back-to-back. Interacts with the co-chaperonin GroES.

It localises to the cytoplasm. The catalysed reaction is ATP + H2O + a folded polypeptide = ADP + phosphate + an unfolded polypeptide.. Together with its co-chaperonin GroES, plays an essential role in assisting protein folding. The GroEL-GroES system forms a nano-cage that allows encapsulation of the non-native substrate proteins and provides a physical environment optimized to promote and accelerate protein folding. The protein is Chaperonin GroEL 1 of Rhodopirellula baltica (strain DSM 10527 / NCIMB 13988 / SH1).